The following is a 164-amino-acid chain: Cytochrome c-type biogenesis protein CcmE (164 aa).

Topologically, residues 1–8 (MNPRRKSR) are cytoplasmic. Residues 9–29 (LYLAMVVLIGISLTTTLVLYA) traverse the membrane as a helical; Signal-anchor for type II membrane protein segment. The Periplasmic portion of the chain corresponds to 30 to 164 (LRSNIDLFYT…RGTNTTGNAL (135 aa)). His130 and Tyr134 together coordinate heme. The interval 140–164 (EEAMKENHSRPAAAYRGTNTTGNAL) is disordered.

Belongs to the CcmE/CycJ family.

It is found in the cell inner membrane. Heme chaperone required for the biogenesis of c-type cytochromes. Transiently binds heme delivered by CcmC and transfers the heme to apo-cytochromes in a process facilitated by CcmF and CcmH. The sequence is that of Cytochrome c-type biogenesis protein CcmE from Yersinia pseudotuberculosis serotype O:3 (strain YPIII).